Reading from the N-terminus, the 463-residue chain is Glycine--tRNA ligase (463 aa).

Residues Arg98 and Glu174 each contribute to the substrate site. ATP is bound by residues 206-208, 216-221, 290-291, and 334-337; these read RNE, FRTREF, EL, and GADR. 221–225 contributes to the substrate binding site; that stretch reads FEQME. 330 to 334 contacts substrate; the sequence is EPSLG.

Belongs to the class-II aminoacyl-tRNA synthetase family. In terms of assembly, homodimer.

It is found in the cytoplasm. It catalyses the reaction tRNA(Gly) + glycine + ATP = glycyl-tRNA(Gly) + AMP + diphosphate. In terms of biological role, catalyzes the attachment of glycine to tRNA(Gly). This is Glycine--tRNA ligase from Staphylococcus haemolyticus (strain JCSC1435).